The sequence spans 285 residues: DegV domain-containing protein CA_C3284 (285 aa).

Positions 3-280 (VKILTDSTSC…PGAIGIAYYT (278 aa)) constitute a DegV domain. Hexadecanoate is bound by residues Ser-59 and Ser-91.

May bind long-chain fatty acids, such as palmitate, and may play a role in lipid transport or fatty acid metabolism. This Clostridium acetobutylicum (strain ATCC 824 / DSM 792 / JCM 1419 / IAM 19013 / LMG 5710 / NBRC 13948 / NRRL B-527 / VKM B-1787 / 2291 / W) protein is DegV domain-containing protein CA_C3284.